Consider the following 183-residue polypeptide: Peptidyl-prolyl cis-trans isomerase 11 (183 aa).

Residues 20 to 182 (FLEVTAGGAP…LPIVVVQCGQ (163 aa)) enclose the PPIase cyclophilin-type domain.

Belongs to the cyclophilin-type PPIase family. PPIase H subfamily.

It carries out the reaction [protein]-peptidylproline (omega=180) = [protein]-peptidylproline (omega=0). Functionally, PPIases accelerate the folding of proteins. It catalyzes the cis-trans isomerization of proline imidic peptide bonds in oligopeptides. The chain is Peptidyl-prolyl cis-trans isomerase 11 (cyn-11) from Caenorhabditis elegans.